Reading from the N-terminus, the 91-residue chain is Kazal-type trypsin inhibitor (91 aa).

A signal peptide spans 1–22; it reads MRHIGVFVGVLALALVLLVVEA. Residues 25–78 form the Kazal-like domain; the sequence is DAERGVCACPRIYMPVCGSNLKTYNNDCLLRCEINSDLGRANNLRKIADQACDN. 3 cysteine pairs are disulfide-bonded: Cys-31–Cys-56, Cys-33–Cys-52, and Cys-41–Cys-76. A glycan (N-linked (GlcNAc...) asparagine) is linked at Asn-78.

Interacts with human PLG (plasmin). As to expression, female salivary gland. Female gut at 3 and 24 hours after blood feeding. Female carcass. Male tissues. Not detected in ovary and fat body at 3 and 24 hours after blood feeding.

The protein resides in the secreted. In terms of biological role, anticoagulant protein that decreases host thrombin (F2) activity via an uncompetitive inhibition mechanism. Inhibits amidolytic activity of host plasmin (PLG). Inhibits amidolytic activity of host trypsin. Inhibits trypsin-like endogenous activity from gut of female mosquitoes 24 hours after feeding and weakly affects enzyme activity from gut 3 hours after feeding, suggesting a possible role as an inhibitor of endogenous proteases. Its function is as follows. (Microbial infection) Limits host plasmin-mediated enhancement of dengue virus type 2 infection in mosquito midgut. This Aedes aegypti (Yellowfever mosquito) protein is Kazal-type trypsin inhibitor.